Reading from the N-terminus, the 340-residue chain is 4-amino-5-hydroxymethyl-2-methylpyrimidine phosphate synthase THI11 (340 aa).

Lys-62 is modified (N6-(pyridoxal phosphate)lysine). His-66 is a catalytic residue. 115–118 is a binding site for pyridoxal 5'-phosphate; the sequence is GEFG. The CCCFC; essential for catalytic activity, may be the site of iron coordination motif lies at 195–199; it reads CCCFC.

The protein belongs to the NMT1/THI5 family. As to quaternary structure, homodimer. The cofactor is Fe cation.

It catalyses the reaction N(6)-(pyridoxal phosphate)-L-lysyl-[4-amino-5-hydroxymethyl-2-methylpyrimidine phosphate synthase] + L-histidyl-[4-amino-5-hydroxymethyl-2-methylpyrimidine phosphate synthase] + 2 Fe(3+) + 4 H2O = L-lysyl-[4-amino-5-hydroxymethyl-2-methylpyrimidine phosphate synthase] + (2S)-2-amino-5-hydroxy-4-oxopentanoyl-[4-amino-5-hydroxymethyl-2-methylpyrimidine phosphate synthase] + 4-amino-2-methyl-5-(phosphooxymethyl)pyrimidine + 3-oxopropanoate + 2 Fe(2+) + 2 H(+). Its pathway is cofactor biosynthesis; thiamine diphosphate biosynthesis. Functionally, responsible for the formation of the pyrimidine heterocycle in the thiamine biosynthesis pathway. Catalyzes the formation of hydroxymethylpyrimidine phosphate (HMP-P) from histidine and pyridoxal phosphate (PLP). The protein uses PLP and the active site histidine to form HMP-P, generating an inactive enzyme. The enzyme can only undergo a single turnover, which suggests it is a suicide enzyme. This is 4-amino-5-hydroxymethyl-2-methylpyrimidine phosphate synthase THI11 from Saccharomyces cerevisiae (strain ATCC 204508 / S288c) (Baker's yeast).